The chain runs to 326 residues: Methionyl-tRNA formyltransferase (326 aa).

Residue 110–113 coordinates (6S)-5,6,7,8-tetrahydrofolate; it reads SLLP. Positions 307–326 are disordered; it reads VGTRFSPPEAPQREPAPGEA.

Belongs to the Fmt family.

It carries out the reaction L-methionyl-tRNA(fMet) + (6R)-10-formyltetrahydrofolate = N-formyl-L-methionyl-tRNA(fMet) + (6S)-5,6,7,8-tetrahydrofolate + H(+). Functionally, attaches a formyl group to the free amino group of methionyl-tRNA(fMet). The formyl group appears to play a dual role in the initiator identity of N-formylmethionyl-tRNA by promoting its recognition by IF2 and preventing the misappropriation of this tRNA by the elongation apparatus. The polypeptide is Methionyl-tRNA formyltransferase (Symbiobacterium thermophilum (strain DSM 24528 / JCM 14929 / IAM 14863 / T)).